Consider the following 475-residue polypeptide: Ribulose bisphosphate carboxylase large chain (475 aa).

Positions 1-2 (MS) are excised as a propeptide. Residue proline 3 is modified to N-acetylproline. An N6,N6,N6-trimethyllysine modification is found at lysine 14. Substrate is bound by residues asparagine 123 and threonine 173. The Proton acceptor role is filled by lysine 175. Lysine 177 contributes to the substrate binding site. Mg(2+) is bound by residues lysine 201, aspartate 203, and glutamate 204. Lysine 201 carries the post-translational modification N6-carboxylysine. The active-site Proton acceptor is the histidine 294. The substrate site is built by arginine 295, histidine 327, and serine 379.

It belongs to the RuBisCO large chain family. Type I subfamily. As to quaternary structure, heterohexadecamer of 8 large chains and 8 small chains; disulfide-linked. The disulfide link is formed within the large subunit homodimers. Mg(2+) serves as cofactor. Post-translationally, the disulfide bond which can form in the large chain dimeric partners within the hexadecamer appears to be associated with oxidative stress and protein turnover.

The protein localises to the plastid. It localises to the chloroplast. The enzyme catalyses 2 (2R)-3-phosphoglycerate + 2 H(+) = D-ribulose 1,5-bisphosphate + CO2 + H2O. The catalysed reaction is D-ribulose 1,5-bisphosphate + O2 = 2-phosphoglycolate + (2R)-3-phosphoglycerate + 2 H(+). RuBisCO catalyzes two reactions: the carboxylation of D-ribulose 1,5-bisphosphate, the primary event in carbon dioxide fixation, as well as the oxidative fragmentation of the pentose substrate in the photorespiration process. Both reactions occur simultaneously and in competition at the same active site. The polypeptide is Ribulose bisphosphate carboxylase large chain (Magnolia acuminata (Cucumber tree)).